Reading from the N-terminus, the 416-residue chain is Isobutyryl-CoA dehydrogenase, mitochondrial (416 aa).

The N-terminal 23 residues, 1 to 23 (MMLRGGCQRVGARLRGLRRGPRG), are a transit peptide targeting the mitochondrion. An N6-acetyllysine; alternate modification is found at Lys-51. Lys-51 carries the N6-succinyllysine; alternate modification. FAD contacts are provided by residues 159–168 (YCLTEPGSGS) and 192–194 (FIS). Ser-168 contacts substrate. Lys-232 carries the post-translational modification N6-acetyllysine. N6-succinyllysine is present on Lys-272. 275–278 (NGGR) provides a ligand contact to substrate. FAD contacts are provided by residues Arg-303, 313–314 (SQ), and 372–376 (QMHGG). Glu-399 functions as the Proton acceptor in the catalytic mechanism. 401–403 (SNE) lines the FAD pocket. Arg-411 is a binding site for substrate.

Belongs to the acyl-CoA dehydrogenase family. As to quaternary structure, homotetramer, formed by a dimer of dimers. FAD is required as a cofactor.

The protein resides in the mitochondrion. The catalysed reaction is 2-methylpropanoyl-CoA + oxidized [electron-transfer flavoprotein] + H(+) = 2-methylpropenoyl-CoA + reduced [electron-transfer flavoprotein]. It catalyses the reaction (2S)-2-methylbutanoyl-CoA + oxidized [electron-transfer flavoprotein] + H(+) = (2E)-2-methylbut-2-enoyl-CoA + reduced [electron-transfer flavoprotein]. It carries out the reaction propanoyl-CoA + oxidized [electron-transfer flavoprotein] + H(+) = acryloyl-CoA + reduced [electron-transfer flavoprotein]. It participates in amino-acid degradation; L-valine degradation. Isobutyryl-CoA dehydrogenase which catalyzes the conversion of 2-methylpropanoyl-CoA to (2E)-2-methylpropenoyl-CoA in the valine catabolic pathway. To a lesser extent, also able to catalyze the oxidation of (2S)-2-methylbutanoyl-CoA. The protein is Isobutyryl-CoA dehydrogenase, mitochondrial (ACAD8) of Bos taurus (Bovine).